Consider the following 543-residue polypeptide: CTP synthase (543 aa).

Residues 1–265 are amidoligase domain; sequence MTNYIFVTGG…DQLVVDRFGL (265 aa). Residue Ser-13 participates in CTP binding. Ser-13 is a binding site for UTP. ATP is bound by residues 14–19 and Asp-71; that span reads SLGKGI. Residues Asp-71 and Glu-139 each contribute to the Mg(2+) site. Residues 146-148, 186-191, and Lys-222 contribute to the CTP site; these read DIE and KTKPTQ. UTP is bound by residues 186–191 and Lys-222; that span reads KTKPTQ. 238 to 240 contacts ATP; sequence KDV. In terms of domain architecture, Glutamine amidotransferase type-1 spans 290–541; that stretch reads NIGMIGKYVE…VAAAGKYQKE (252 aa). L-glutamine is bound at residue Gly-351. The Nucleophile; for glutamine hydrolysis role is filled by Cys-378. L-glutamine-binding positions include 379–382, Glu-402, and Arg-469; that span reads LGMQ. Residues His-514 and Glu-516 contribute to the active site.

The protein belongs to the CTP synthase family. As to quaternary structure, homotetramer.

The enzyme catalyses UTP + L-glutamine + ATP + H2O = CTP + L-glutamate + ADP + phosphate + 2 H(+). It catalyses the reaction L-glutamine + H2O = L-glutamate + NH4(+). It carries out the reaction UTP + NH4(+) + ATP = CTP + ADP + phosphate + 2 H(+). It functions in the pathway pyrimidine metabolism; CTP biosynthesis via de novo pathway; CTP from UDP: step 2/2. Allosterically activated by GTP, when glutamine is the substrate; GTP has no effect on the reaction when ammonia is the substrate. The allosteric effector GTP functions by stabilizing the protein conformation that binds the tetrahedral intermediate(s) formed during glutamine hydrolysis. Inhibited by the product CTP, via allosteric rather than competitive inhibition. Its function is as follows. Catalyzes the ATP-dependent amination of UTP to CTP with either L-glutamine or ammonia as the source of nitrogen. Regulates intracellular CTP levels through interactions with the four ribonucleotide triphosphates. This Alteromonas mediterranea (strain DSM 17117 / CIP 110805 / LMG 28347 / Deep ecotype) protein is CTP synthase.